A 952-amino-acid chain; its full sequence is Probable RNA-binding protein 19 (952 aa).

The RRM 1 domain maps to 2–79 (SRLIVKNLPN…TRITVEFCKS (78 aa)). 3 disordered regions span residues 85-126 (KPRA…LEKL), 159-267 (KAKT…RGAV), and 367-395 (KQAP…EEED). Low complexity predominate over residues 95-109 (KSSQPKQPSQDSVPS). Positions 163–180 (KASSDYLNFDSDSNSDSG) are enriched in polar residues. Phosphoserine is present on residues S177, S179, and S183. 2 stretches are compositionally biased toward acidic residues: residues 181–196 (QESE…EEEQ) and 224–251 (SSED…EEEG). 2 RRM domains span residues 293–368 (YTVK…REKQ) and 400–478 (GRLF…PSTI). Residue K479 forms a Glycyl lysine isopeptide (Lys-Gly) (interchain with G-Cter in SUMO2) linkage. The segment at 481–504 (EASQEANAPGSSYKKKKEAMDKAN) is disordered. The region spanning 584–656 (TVILAKNLPA…VPLYLEWAPI (73 aa)) is the RRM 4 domain. Over residues 664–679 (QKKDSQHEQPAEKAEV) the composition is skewed to basic and acidic residues. Residues 664–719 (QKKDSQHEQPAEKAEVEQETVLDPEGEKASVEGAEASTGKMEEEEEEEEEEEEESI) form a disordered region. Position 693 is a phosphoserine (S693). Over residues 705-718 (EEEEEEEEEEEEES) the composition is skewed to acidic residues. RRM domains lie at 722 to 803 (CTLF…ISER) and 824 to 904 (SKIL…WADS). Phosphoserine occurs at positions 928 and 944.

It belongs to the RRM MRD1 family. In terms of tissue distribution, expressed in the crypts of Lieberkuhn of the intestine (at protein level).

The protein localises to the nucleus. It localises to the nucleolus. Its subcellular location is the nucleoplasm. The protein resides in the cytoplasm. It is found in the chromosome. Its function is as follows. Plays a role in embryo pre-implantation development. The protein is Probable RNA-binding protein 19 (Rbm19) of Mus musculus (Mouse).